Reading from the N-terminus, the 637-residue chain is Formate--tetrahydrofolate ligase (637 aa).

81 to 88 (TPLGEGKS) contacts ATP.

It belongs to the formate--tetrahydrofolate ligase family. As to quaternary structure, homodimer.

The catalysed reaction is (6S)-5,6,7,8-tetrahydrofolate + formate + ATP = (6R)-10-formyltetrahydrofolate + ADP + phosphate. It functions in the pathway one-carbon metabolism; tetrahydrofolate interconversion. In Spinacia oleracea (Spinach), this protein is Formate--tetrahydrofolate ligase.